Here is a 217-residue protein sequence, read N- to C-terminus: Small ribosomal subunit protein eS6 (217 aa).

This sequence belongs to the eukaryotic ribosomal protein eS6 family. Post-translationally, phosphorylated.

This is Small ribosomal subunit protein eS6 (RPS6) from Encephalitozoon cuniculi (strain GB-M1) (Microsporidian parasite).